Reading from the N-terminus, the 532-residue chain is Putative sodium-dependent excitatory amino acid transporter glt-3 (532 aa).

At 1–5 (MGMKK) the chain is on the cytoplasmic side. 3 helical membrane passes run 6-26 (DLLL…GFVI), 46-66 (FMQI…ISAL), and 83-103 (IYYM…VSSI). Topologically, residues 104-181 (HPGDPELIHE…SEVLHKQTLT (78 aa)) are extracellular. N-linked (GlcNAc...) asparagine glycosylation is found at Asn164 and Asn169. Transmembrane regions (helical) follow at residues 182–202 (YTNE…GIIL), 222–242 (IIMR…LSLV), 264–284 (VTVI…LYFL), 352–372 (AVAV…MDLV), and 383–402 (IGSG…LTTV).

Belongs to the dicarboxylate/amino acid:cation symporter (DAACS) (TC 2.A.23) family.

Its subcellular location is the membrane. The chain is Putative sodium-dependent excitatory amino acid transporter glt-3 (glt-3) from Caenorhabditis elegans.